The chain runs to 57 residues: Granulin-1 (57 aa).

2 disulfides stabilise this stretch: cysteine 4–cysteine 16 and cysteine 10–cysteine 26.

This sequence belongs to the granulin family. In terms of processing, granulins are disulfide bridged. As to expression, ubiquitous.

It is found in the secreted. Granulins have possible cytokine-like activity. They may play a role in inflammation, wound repair, and tissue remodeling. This is Granulin-1 from Cyprinus carpio (Common carp).